Consider the following 101-residue polypeptide: Small ribosomal subunit protein uS14 (101 aa).

It belongs to the universal ribosomal protein uS14 family. Part of the 30S ribosomal subunit. Contacts proteins S3 and S10.

Binds 16S rRNA, required for the assembly of 30S particles and may also be responsible for determining the conformation of the 16S rRNA at the A site. In Psychromonas ingrahamii (strain DSM 17664 / CCUG 51855 / 37), this protein is Small ribosomal subunit protein uS14.